The sequence spans 548 residues: Myrosinase (548 aa).

The N-terminal stretch at M1–A20 is a signal peptide. Intrachain disulfides connect C26/C458, C34/C454, and C226/C236. Position 59 (Q59) interacts with substrate. Zn(2+)-binding residues include H76 and D90. An N-linked (GlcNAc...) asparagine glycan is attached at N110. H161 and N206 together coordinate substrate. Q207 contacts L-ascorbate. Residue N240 is glycosylated (N-linked (GlcNAc...) asparagine). R281 is an L-ascorbate binding site. N331 carries an N-linked (GlcNAc...) asparagine glycan. A substrate-binding site is contributed by Y352. E429 functions as the Nucleophile in the catalytic mechanism. Substrate-binding positions include W477 and E484 to F485. N-linked (GlcNAc...) asparagine glycosylation is present at N520.

This sequence belongs to the glycosyl hydrolase 1 family. As to quaternary structure, homodimer. In vacuoles called myrosin grains of a certain class of cells, myrosin cells, distributed in the cotyledons and the axis of the embryo as well as in different organs of the growing plant.

It is found in the vacuole. The enzyme catalyses a thioglucoside + H2O = a sugar + a thiol.. In terms of biological role, degradation of glucosinolates (glucose residue linked by a thioglucoside bound to an amino acid derivative) to glucose, sulfate and any of the products: thiocyanates, isothiocyanates, nitriles, epithionitriles or oxazolidine-2-thiones. This is Myrosinase from Brassica napus (Rape).